The primary structure comprises 616 residues: Nucleoprotein (616 aa).

2 short sequence motifs (nuclear localization signal) span residues 230 to 233 and 473 to 476; these read RPKR and KPKK.

Homomultimerizes to form the nucleocapsid. Binds to viral genomic RNA. Protein-RNA contacts are mediated by a combination of electrostatic interactions between positively charged residues and the phosphate backbone and planar interactions between aromatic side chains and bases.

The protein resides in the virion. The protein localises to the host nucleus. It localises to the host nucleolus. Functionally, encapsidates the negative strand viral RNA, protecting it from nucleases. The encapsidated genomic RNA is termed the ribonucleoprotein (RNP) and serves as template for transcription and replication. In Gadus morhua (Atlantic cod), this protein is Nucleoprotein.